The chain runs to 155 residues: Large ribosomal subunit protein uL22c (155 aa).

It belongs to the universal ribosomal protein uL22 family. Part of the 50S ribosomal subunit.

Its subcellular location is the plastid. It localises to the chloroplast. In terms of biological role, this protein binds specifically to 23S rRNA. Functionally, the globular domain of the protein is located near the polypeptide exit tunnel on the outside of the subunit, while an extended beta-hairpin is found that lines the wall of the exit tunnel in the center of the 70S ribosome. The chain is Large ribosomal subunit protein uL22c (rpl22) from Coffea arabica (Arabian coffee).